The chain runs to 300 residues: Actin-related protein 2/3 complex subunit 2-A (300 aa).

This sequence belongs to the ARPC2 family. As to quaternary structure, component of the Arp2/3 complex composed of actr2/arp2, actr3/arp3, arpc1 (arpc1a or arpc1b), arpc2, arpc3, arpc4 and arpc5.

Its subcellular location is the cytoplasm. It is found in the cytoskeleton. The protein resides in the cell projection. It localises to the nucleus. Its function is as follows. Actin-binding component of the Arp2/3 complex, a multiprotein complex that mediates actin polymerization upon stimulation by nucleation-promoting factor (NPF). The Arp2/3 complex mediates the formation of branched actin networks in the cytoplasm, providing the force for cell motility. In addition to its role in the cytoplasmic cytoskeleton, the Arp2/3 complex also promotes actin polymerization in the nucleus, thereby regulating gene transcription and repair of damaged DNA. The Arp2/3 complex promotes homologous recombination (HR) repair in response to DNA damage by promoting nuclear actin polymerization, leading to drive motility of double-strand breaks (DSBs). The protein is Actin-related protein 2/3 complex subunit 2-A (arpc2-a) of Xenopus laevis (African clawed frog).